A 74-amino-acid polypeptide reads, in one-letter code: RNA-binding protein Hfq (74 aa).

The Sm domain occupies 9 to 69 (DQYLNQLRKN…ISTFSPVKNV (61 aa)).

Belongs to the Hfq family. As to quaternary structure, homohexamer.

Functionally, RNA chaperone that binds small regulatory RNA (sRNAs) and mRNAs to facilitate mRNA translational regulation in response to envelope stress, environmental stress and changes in metabolite concentrations. Also binds with high specificity to tRNAs. This chain is RNA-binding protein Hfq, found in Oceanobacillus iheyensis (strain DSM 14371 / CIP 107618 / JCM 11309 / KCTC 3954 / HTE831).